The chain runs to 584 residues: Outer membrane transporter CdiB-2 (584 aa).

The signal sequence occupies residues 1–20; sequence MATRFAILPVTALITLTAQA. The span at 24 to 44 shows a compositional bias: low complexity; that stretch reads PTPNDQAAAARANAEQNQQAQ. The segment at 24–72 is disordered; sequence PTPNDQAAAARANAEQNQQAQQRRDAQQRDATVQAPGVRSDVPRPEAYP. The POTRA domain occupies 98 to 171; sequence SKAQGASALP…GALKLALIPG (74 aa).

The protein belongs to the TPS (TC 1.B.20) family.

It localises to the cell outer membrane. Its function is as follows. Potential outer membrane protein component of a toxin-immunity protein module, which functions as a cellular contact-dependent growth inhibition (CDI) system. CDI modules allow bacteria to communicate with and inhibit the growth of closely related neighboring bacteria in a contact-dependent fashion. This protein may be required for secretion and assembly of the CdiA toxin protein. Expression of this cdiAIB locus in B.thailandensis confers protection against other bacteria carrying the locus; growth inhibition requires cellular contact. In terms of biological role, probable member of a two partner secretion pathway (TPS) in which it mediates the secretion of CdiA2. In Burkholderia pseudomallei (strain 1026b), this protein is Outer membrane transporter CdiB-2 (cdiB2).